The chain runs to 374 residues: STAGKVIKCKAAVLWEPKKPFSIEEVEVAPPKAHEVRVKIIATGICRSDDHVISGVLVMPFPIILGHEAAGVVESVGEGVTSVKPGDKVIPLFVPQCGECSVCLSTKGNLCRKNDIGPASALMPDGTSRFTCKGKAIHHFAGTSTFTEYTVLHETAVAKIDAAAPLEKVCLIGCGFSTGYGAALQTAKVEPGSTCAVFGLGGVGLSVVMGCKAAGASRIIGVDINKDKFAKAKELGATDCVNPKDFTKPIHEVLMEMTGLGVDYSFEVIGHTETMAAALASCHFNYGVSVIVGVPPAAEKLSFDPMLLFSGRTWKGSVFGGWKSKDSVPKLVADYMEKKFVLDPLITHTLPFHKINEGFDLLRTGKSIRSVLLF.

Residue Ser1 is modified to N-acetylserine. Positions 46, 67, 97, 100, 103, 111, and 174 each coordinate Zn(2+). NAD(+) is bound by residues 199–204 (GLGGVG), Asp223, Lys228, 292–294 (VGV), and Arg369.

The protein belongs to the zinc-containing alcohol dehydrogenase family. Class-I subfamily. As to quaternary structure, homodimer. Requires Zn(2+) as cofactor.

It is found in the cytoplasm. The catalysed reaction is a primary alcohol + NAD(+) = an aldehyde + NADH + H(+). It catalyses the reaction a secondary alcohol + NAD(+) = a ketone + NADH + H(+). In Struthio camelus (Common ostrich), this protein is Alcohol dehydrogenase 1 (ADH1).